We begin with the raw amino-acid sequence, 226 residues long: Uridylate kinase (226 aa).

Residue Lys6–Lys10 participates in ATP binding. Gly43 contributes to the UMP binding site. ATP is bound by residues Gly44 and Arg48. UMP-binding positions include Asp65 and Phe113 to Thr119. ATP-binding residues include Thr139, Asn140, Tyr145, and Asp148.

This sequence belongs to the UMP kinase family. Homohexamer.

It is found in the cytoplasm. It carries out the reaction UMP + ATP = UDP + ADP. The protein operates within pyrimidine metabolism; CTP biosynthesis via de novo pathway; UDP from UMP (UMPK route): step 1/1. Its activity is regulated as follows. Inhibited by UTP. Its function is as follows. Catalyzes the reversible phosphorylation of UMP to UDP. This is Uridylate kinase from Saccharolobus islandicus (strain Y.N.15.51 / Yellowstone #2) (Sulfolobus islandicus).